We begin with the raw amino-acid sequence, 350 residues long: 4-hydroxythreonine-4-phosphate dehydrogenase (350 aa).

The substrate site is built by His-138 and Thr-139. Positions 173, 218, and 273 each coordinate a divalent metal cation. Substrate-binding residues include Lys-281, Asn-290, and Arg-299.

The protein belongs to the PdxA family. In terms of assembly, homodimer. Zn(2+) serves as cofactor. Requires Mg(2+) as cofactor. The cofactor is Co(2+).

The protein resides in the cytoplasm. It carries out the reaction 4-(phosphooxy)-L-threonine + NAD(+) = 3-amino-2-oxopropyl phosphate + CO2 + NADH. It participates in cofactor biosynthesis; pyridoxine 5'-phosphate biosynthesis; pyridoxine 5'-phosphate from D-erythrose 4-phosphate: step 4/5. In terms of biological role, catalyzes the NAD(P)-dependent oxidation of 4-(phosphooxy)-L-threonine (HTP) into 2-amino-3-oxo-4-(phosphooxy)butyric acid which spontaneously decarboxylates to form 3-amino-2-oxopropyl phosphate (AHAP). The polypeptide is 4-hydroxythreonine-4-phosphate dehydrogenase (Xanthobacter autotrophicus (strain ATCC BAA-1158 / Py2)).